Here is a 456-residue protein sequence, read N- to C-terminus: Exodeoxyribonuclease 7 large subunit (456 aa).

This sequence belongs to the XseA family. Heterooligomer composed of large and small subunits.

It is found in the cytoplasm. The enzyme catalyses Exonucleolytic cleavage in either 5'- to 3'- or 3'- to 5'-direction to yield nucleoside 5'-phosphates.. Functionally, bidirectionally degrades single-stranded DNA into large acid-insoluble oligonucleotides, which are then degraded further into small acid-soluble oligonucleotides. This Azotobacter vinelandii (strain DJ / ATCC BAA-1303) protein is Exodeoxyribonuclease 7 large subunit.